A 207-amino-acid polypeptide reads, in one-letter code: Small ribosomal subunit protein uS4 (207 aa).

The segment at 26-53 (KPFDVKTKKHAKAPGQHGQARGKQSEYS) is disordered. In terms of domain architecture, S4 RNA-binding spans 97–159 (SRLDNVVYRM…AKQQLRIKNA (63 aa)).

This sequence belongs to the universal ribosomal protein uS4 family. As to quaternary structure, part of the 30S ribosomal subunit. Contacts protein S5. The interaction surface between S4 and S5 is involved in control of translational fidelity.

In terms of biological role, one of the primary rRNA binding proteins, it binds directly to 16S rRNA where it nucleates assembly of the body of the 30S subunit. With S5 and S12 plays an important role in translational accuracy. The polypeptide is Small ribosomal subunit protein uS4 (Acinetobacter baylyi (strain ATCC 33305 / BD413 / ADP1)).